The chain runs to 292 residues: tRNA pseudouridine synthase B (292 aa).

D38 serves as the catalytic Nucleophile.

This sequence belongs to the pseudouridine synthase TruB family. Type 1 subfamily.

The catalysed reaction is uridine(55) in tRNA = pseudouridine(55) in tRNA. Its function is as follows. Responsible for synthesis of pseudouridine from uracil-55 in the psi GC loop of transfer RNAs. The chain is tRNA pseudouridine synthase B from Streptococcus gordonii (strain Challis / ATCC 35105 / BCRC 15272 / CH1 / DL1 / V288).